We begin with the raw amino-acid sequence, 511 residues long: Type 2 DNA topoisomerase 6 subunit B-like (511 aa).

Residues 398–485 are disordered; the sequence is DSAQGTEDAP…RALAPGRASL (88 aa). Polar residues predominate over residues 408-422; that stretch reads DNSSLELLADTSGQA. A compositionally biased stretch (low complexity) spans 440 to 451; the sequence is LRSARAPSPSEA. Over residues 466–475 the composition is skewed to basic and acidic residues; sequence RGREHREAHG.

It belongs to the TOP6B-like family. In terms of assembly, heterotetramer of SPO11 and 2 TOP6BL chains. Interacts with SPO11. As to expression, detected in lung, spleen,colon and in skeletal muscle. Expressed in the ovaries, Fallopian tubes and uterus.

It is found in the chromosome. Functionally, component of a topoisomerase 6 complex specifically required for meiotic recombination. Together with SPO11, mediates DNA cleavage that forms the double-strand breaks (DSB) that initiate meiotic recombination. The complex promotes relaxation of negative and positive supercoiled DNA and DNA decatenation through cleavage and ligation cycles. The protein is Type 2 DNA topoisomerase 6 subunit B-like of Homo sapiens (Human).